A 226-amino-acid polypeptide reads, in one-letter code: Deoxyribose-phosphate aldolase (226 aa).

Catalysis depends on D94, which acts as the Proton donor/acceptor. The active-site Schiff-base intermediate with acetaldehyde is K156. The active-site Proton donor/acceptor is the K185.

This sequence belongs to the DeoC/FbaB aldolase family. DeoC type 1 subfamily.

The protein localises to the cytoplasm. The enzyme catalyses 2-deoxy-D-ribose 5-phosphate = D-glyceraldehyde 3-phosphate + acetaldehyde. Its pathway is carbohydrate degradation; 2-deoxy-D-ribose 1-phosphate degradation; D-glyceraldehyde 3-phosphate and acetaldehyde from 2-deoxy-alpha-D-ribose 1-phosphate: step 2/2. Its function is as follows. Catalyzes a reversible aldol reaction between acetaldehyde and D-glyceraldehyde 3-phosphate to generate 2-deoxy-D-ribose 5-phosphate. The protein is Deoxyribose-phosphate aldolase of Burkholderia lata (strain ATCC 17760 / DSM 23089 / LMG 22485 / NCIMB 9086 / R18194 / 383).